The chain runs to 684 residues: Glycine--tRNA ligase beta subunit (684 aa).

This sequence belongs to the class-II aminoacyl-tRNA synthetase family. Tetramer of two alpha and two beta subunits.

The protein localises to the cytoplasm. The catalysed reaction is tRNA(Gly) + glycine + ATP = glycyl-tRNA(Gly) + AMP + diphosphate. This chain is Glycine--tRNA ligase beta subunit, found in Pseudomonas aeruginosa (strain LESB58).